Here is a 185-residue protein sequence, read N- to C-terminus: Elongation factor P (185 aa).

Belongs to the elongation factor P family.

It localises to the cytoplasm. Its pathway is protein biosynthesis; polypeptide chain elongation. Involved in peptide bond synthesis. Stimulates efficient translation and peptide-bond synthesis on native or reconstituted 70S ribosomes in vitro. Probably functions indirectly by altering the affinity of the ribosome for aminoacyl-tRNA, thus increasing their reactivity as acceptors for peptidyl transferase. In Deinococcus geothermalis (strain DSM 11300 / CIP 105573 / AG-3a), this protein is Elongation factor P.